A 360-amino-acid chain; its full sequence is Probable butyrate kinase (360 aa).

Belongs to the acetokinase family.

It localises to the cytoplasm. It carries out the reaction butanoate + ATP = butanoyl phosphate + ADP. The polypeptide is Probable butyrate kinase (Enterococcus faecalis (strain ATCC 700802 / V583)).